The chain runs to 146 residues: Small ribosomal subunit protein uS5 (146 aa).

One can recognise an S5 DRBM domain in the interval 8 to 71 (FQEAIVKIGR…DDAFKSLVTV (64 aa)).

It belongs to the universal ribosomal protein uS5 family. Part of the 30S ribosomal subunit. Contacts proteins S4 and S8.

Functionally, with S4 and S12 plays an important role in translational accuracy. In terms of biological role, located at the back of the 30S subunit body where it stabilizes the conformation of the head with respect to the body. In Aliarcobacter butzleri (strain RM4018) (Arcobacter butzleri), this protein is Small ribosomal subunit protein uS5.